The following is a 588-amino-acid chain: L-fucose isomerase (588 aa).

Active-site proton acceptor residues include glutamate 335 and aspartate 359. Positions 335, 359, and 525 each coordinate Mn(2+).

It belongs to the L-fucose isomerase family. Requires Mn(2+) as cofactor.

The protein localises to the cytoplasm. The catalysed reaction is L-fucose = L-fuculose. It functions in the pathway carbohydrate degradation; L-fucose degradation; L-lactaldehyde and glycerone phosphate from L-fucose: step 1/3. Functionally, converts the aldose L-fucose into the corresponding ketose L-fuculose. In Streptococcus pneumoniae serotype 4 (strain ATCC BAA-334 / TIGR4), this protein is L-fucose isomerase.